A 338-amino-acid polypeptide reads, in one-letter code: 1-aminocyclopropane-1-carboxylate deaminase (338 aa).

Lysine 51 is modified (N6-(pyridoxal phosphate)lysine). Catalysis depends on serine 78, which acts as the Nucleophile.

This sequence belongs to the ACC deaminase/D-cysteine desulfhydrase family. In terms of assembly, homotrimer. Pyridoxal 5'-phosphate serves as cofactor.

It catalyses the reaction 1-aminocyclopropane-1-carboxylate + H2O = 2-oxobutanoate + NH4(+). Catalyzes a cyclopropane ring-opening reaction, the irreversible conversion of 1-aminocyclopropane-1-carboxylate (ACC) to ammonia and alpha-ketobutyrate. Allows growth on ACC as a nitrogen source. This is 1-aminocyclopropane-1-carboxylate deaminase from Burkholderia pseudomallei (strain 1710b).